Here is a 538-residue protein sequence, read N- to C-terminus: Cytochrome P450 monooxygenase claO (538 aa).

Transmembrane regions (helical) follow at residues Ile-7–Gly-27 and Ile-222–Leu-242. Residue Cys-475 participates in heme binding.

The protein belongs to the cytochrome P450 family. The cofactor is heme.

The protein localises to the membrane. Its pathway is secondary metabolite biosynthesis; terpenoid biosynthesis. Its function is as follows. Cytochrome P450 monooxygenase; part of the gene cluster that mediates the biosynthesis of clavilactone A, a meroterpenoid that features a unique benzo-fused ten-membered carbocyclic ring unit with an alpha,beta-epoxy-gamma-lactone moiety, forming an intriguing 10/5/3 tricyclic nested skeleton. Cytochrome P450 monooxygenases claO, claP, claQ, claU, and claW are close orthologs, suggesting that a redundant function or pseudogenes are present in the cla cluster. These monoxygenases are not involved in clavilactone A biosynthesis nor in its modification. ClaR, ClaS and ClaT are sufficient to produce clavilactone A. The biosynthesis begins with the prenyltransferase claS that transfers geranyl pyrophosphate (GPP) to hydroquinone to produces geranylhydroquinone. The cytochrome P450 monooxygenase claR then catalyzes the diradical coupling reaction between the intramolecular hydroquinone and allyl moieties to form the benzo-fused ten-membered carbocyclic ring unit of wigantol. Finally the cytochrome P450 monooxygenase claT exquisitely and stereoselectively assembles the alpha,beta-epoxy-gamma-lactone moiety, producing clavilactone A via arnebinol A. This Ampulloclitocybe clavipes (Club foot) protein is Cytochrome P450 monooxygenase claO.